A 147-amino-acid polypeptide reads, in one-letter code: UPF0260 protein Ent638_2368 (147 aa).

It belongs to the UPF0260 family.

This chain is UPF0260 protein Ent638_2368, found in Enterobacter sp. (strain 638).